The primary structure comprises 324 residues: Clavaminate synthase 1 (324 aa).

Fe cation contacts are provided by His-144, Glu-146, and His-279. Arg-293 contacts 2-oxoglutarate.

Belongs to the clavaminate synthase family. Requires Fe(2+) as cofactor.

It carries out the reaction deoxyamidinoproclavaminate + 2-oxoglutarate + O2 = amidinoproclavaminate + succinate + CO2. The enzyme catalyses proclavaminate + 2-oxoglutarate + O2 = dihydroclavaminate + succinate + CO2 + H2O. It catalyses the reaction dihydroclavaminate + 2-oxoglutarate + O2 = clavaminate + succinate + CO2 + H2O. It participates in antibiotic biosynthesis; clavulanate biosynthesis; clavulanate from D-glyceraldehyde 3-phosphate and L-arginine: step 3/8. It functions in the pathway antibiotic biosynthesis; clavulanate biosynthesis; clavulanate from D-glyceraldehyde 3-phosphate and L-arginine: step 5/8. Its pathway is antibiotic biosynthesis; clavulanate biosynthesis; clavulanate from D-glyceraldehyde 3-phosphate and L-arginine: step 6/8. This is Clavaminate synthase 1 (cs1) from Streptomyces clavuligerus.